Consider the following 298-residue polypeptide: Elongation factor Ts (298 aa).

Positions 78–81 are involved in Mg(2+) ion dislocation from EF-Tu; the sequence is TDFV.

It belongs to the EF-Ts family.

It is found in the cytoplasm. Functionally, associates with the EF-Tu.GDP complex and induces the exchange of GDP to GTP. It remains bound to the aminoacyl-tRNA.EF-Tu.GTP complex up to the GTP hydrolysis stage on the ribosome. The sequence is that of Elongation factor Ts from Mycoplasmopsis agalactiae (strain NCTC 10123 / CIP 59.7 / PG2) (Mycoplasma agalactiae).